The following is an 84-amino-acid chain: U2-theraphotoxin-Cg1b 2 (84 aa).

An N-terminal signal peptide occupies residues 1–21 (MKVSVLITLAVLGVMFLLTSA). The propeptide occupies 22-48 (EERGSDQMDSPAWLKSMEIIFQSEERE). 3 cysteine pairs are disulfide-bonded: Cys49–Cys63, Cys56–Cys68, and Cys62–Cys76.

It belongs to the neurotoxin 10 (Hwtx-1) family. 06 (F4b) subfamily. In terms of tissue distribution, expressed by the venom gland.

The protein localises to the secreted. Functionally, probable ion channel inhibitor. The sequence is that of U2-theraphotoxin-Cg1b 2 from Chilobrachys guangxiensis (Chinese earth tiger tarantula).